Reading from the N-terminus, the 189-residue chain is Parkinson disease protein 7 (189 aa).

N-acetylalanine is present on A2. Residues C46 and C53 are each lipidated (S-palmitoyl cysteine). Residue Y67 is modified to Phosphotyrosine. C106 functions as the Nucleophile in the catalytic mechanism. C106 bears the Cysteine sulfinic acid (-SO2H); alternate mark. A lipid anchor (S-palmitoyl cysteine; alternate) is attached at C106. H126 is a catalytic residue. Residue K130 forms a Glycyl lysine isopeptide (Lys-Gly) (interchain with G-Cter in SUMO) linkage. Residue K148 is modified to N6-acetyllysine. K182 carries the N6-succinyllysine modification.

It belongs to the peptidase C56 family. Homodimer. Binds EFCAB6/DJBP and PIAS2. Part of a ternary complex containing PARK7, EFCAB6/DJBP and AR. Interacts (via N-terminus) with OTUD7B. Interacts with BBS1, HIPK1, CLCF1 and MTERF. Forms a complex with PINK1 and PRKN. Interacts (via C-terminus) with NCF1; the interaction is enhanced by LPS and modulates NCF1 phosphorylation and membrane translocation. Interacts with NENF. Deglycase activity does not require glutathione as a cofactor, however, glycated glutathione constitutes a PARK7 substrate. is required as a cofactor. Sumoylated on Lys-130 by PIAS2 or PIAS4; which is enhanced after ultraviolet irradiation and essential for cell-growth promoting activity and transforming activity. Post-translationally, cys-106 is easily oxidized to sulfinic acid. In terms of processing, undergoes cleavage of a C-terminal peptide and subsequent activation of protease activity in response to oxidative stress. Highly expressed in pancreas, kidney, skeletal muscle, liver, testis and heart. Detected at slightly lower levels in placenta and brain (at protein level). Detected in astrocytes, Sertoli cells, spermatogonia, spermatids and spermatozoa. Expressed by pancreatic islets at higher levels than surrounding exocrine tissues.

It is found in the cell membrane. The protein resides in the cytoplasm. Its subcellular location is the nucleus. The protein localises to the membrane raft. It localises to the mitochondrion. It is found in the endoplasmic reticulum. It catalyses the reaction N(omega)-(1-hydroxy-2-oxopropyl)-L-arginyl-[protein] + H2O = lactate + L-arginyl-[protein] + H(+). The catalysed reaction is N(6)-(1-hydroxy-2-oxopropyl)-L-lysyl-[protein] + H2O = lactate + L-lysyl-[protein] + H(+). The enzyme catalyses S-(1-hydroxy-2-oxopropyl)-L-cysteinyl-[protein] + H2O = lactate + L-cysteinyl-[protein] + H(+). It carries out the reaction N(omega)-(1-hydroxy-2-oxoethyl)-L-arginyl-[protein] + H2O = L-arginyl-[protein] + glycolate + H(+). It catalyses the reaction N(6)-(1-hydroxy-2-oxoethyl)-L-lysyl-[protein] + H2O = glycolate + L-lysyl-[protein] + H(+). The catalysed reaction is S-(1-hydroxy-2-oxoethyl)-L-cysteinyl-[protein] + H2O = glycolate + L-cysteinyl-[protein] + H(+). The enzyme catalyses N(2)-(1-hydroxy-2-oxopropyl)-dGTP + H2O = lactate + dGTP + H(+). It carries out the reaction N(2)-(1-hydroxy-2-oxopropyl)-GTP + H2O = lactate + GTP + H(+). It catalyses the reaction N(2)-(1-hydroxy-2-oxopropyl)-GDP + H2O = lactate + GDP + H(+). The catalysed reaction is N(2)-(1-hydroxy-2-oxopropyl)-GMP + H2O = lactate + GMP + H(+). The enzyme catalyses N(2)-(1-hydroxy-2-oxoethyl)-dGTP + H2O = dGTP + glycolate + H(+). It carries out the reaction N(2)-(1-hydroxy-2-oxoethyl)-GTP + H2O = glycolate + GTP + H(+). It catalyses the reaction N(2)-(1-hydroxy-2-oxoethyl)-GDP + H2O = glycolate + GDP + H(+). The catalysed reaction is N(2)-(1-hydroxy-2-oxoethyl)-GMP + H2O = glycolate + GMP + H(+). The enzyme catalyses an N(2)-(1-hydroxy-2-oxopropyl)-guanosine in RNA + H2O = a guanosine in RNA + lactate + H(+). It carries out the reaction an N(2)-(1-hydroxy-2-oxopropyl)-2'-deoxyguanosine in DNA + H2O = a 2'-deoxyguanosine in DNA + lactate + H(+). It catalyses the reaction an N(2)-(1-hydroxy-2-oxoethyl)-guanosine in RNA + H2O = a guanosine in RNA + glycolate + H(+). The catalysed reaction is an N(2)-(1-hydroxy-2-oxoethyl)-2'-deoxyguanosine in DNA + H2O = a 2'-deoxyguanosine in DNA + glycolate + H(+). Functionally, multifunctional protein with controversial molecular function which plays an important role in cell protection against oxidative stress and cell death acting as oxidative stress sensor and redox-sensitive chaperone and protease. It is involved in neuroprotective mechanisms like the stabilization of NFE2L2 and PINK1 proteins, male fertility as a positive regulator of androgen signaling pathway as well as cell growth and transformation through, for instance, the modulation of NF-kappa-B signaling pathway. Has been described as a protein and nucleotide deglycase that catalyzes the deglycation of the Maillard adducts formed between amino groups of proteins or nucleotides and reactive carbonyl groups of glyoxals. But this function is rebuted by other works. As a protein deglycase, repairs methylglyoxal- and glyoxal-glycated proteins, and releases repaired proteins and lactate or glycolate, respectively. Deglycates cysteine, arginine and lysine residues in proteins, and thus reactivates these proteins by reversing glycation by glyoxals. Acts on early glycation intermediates (hemithioacetals and aminocarbinols), preventing the formation of advanced glycation endproducts (AGE) that cause irreversible damage. Also functions as a nucleotide deglycase able to repair glycated guanine in the free nucleotide pool (GTP, GDP, GMP, dGTP) and in DNA and RNA. Is thus involved in a major nucleotide repair system named guanine glycation repair (GG repair), dedicated to reversing methylglyoxal and glyoxal damage via nucleotide sanitization and direct nucleic acid repair. Protects histones from adduction by methylglyoxal, controls the levels of methylglyoxal-derived argininine modifications on chromatin. Able to remove the glycations and restore histone 3, histone glycation disrupts both local and global chromatin architecture by altering histone-DNA interactions as well as histone acetylation and ubiquitination levels. Displays a very low glyoxalase activity that may reflect its deglycase activity. Eliminates hydrogen peroxide and protects cells against hydrogen peroxide-induced cell death. Required for correct mitochondrial morphology and function as well as for autophagy of dysfunctional mitochondria. Plays a role in regulating expression or stability of the mitochondrial uncoupling proteins SLC25A14 and SLC25A27 in dopaminergic neurons of the substantia nigra pars compacta and attenuates the oxidative stress induced by calcium entry into the neurons via L-type channels during pacemaking. Regulates astrocyte inflammatory responses, may modulate lipid rafts-dependent endocytosis in astrocytes and neuronal cells. In pancreatic islets, involved in the maintenance of mitochondrial reactive oxygen species (ROS) levels and glucose homeostasis in an age- and diet dependent manner. Protects pancreatic beta cells from cell death induced by inflammatory and cytotoxic setting. Binds to a number of mRNAs containing multiple copies of GG or CC motifs and partially inhibits their translation but dissociates following oxidative stress. Metal-binding protein able to bind copper as well as toxic mercury ions, enhances the cell protection mechanism against induced metal toxicity. In macrophages, interacts with the NADPH oxidase subunit NCF1 to direct NADPH oxidase-dependent ROS production, and protects against sepsis. The polypeptide is Parkinson disease protein 7 (Homo sapiens (Human)).